The following is a 360-amino-acid chain: Flavin-dependent trigonelline monooxygenase, oxygenase component (360 aa).

This sequence belongs to the bacterial luciferase oxidoreductase family. In terms of assembly, homodimer. The trigonelline monooxygenase is composed of a reductase component TgnA and an oxygenase component TgnB.

It catalyses the reaction N-methylnicotinate + FMNH2 + O2 = (Z)-2-((N-methylformamido)methylene)-5-hydroxybutanolactone + FMN + H(+). The enzyme catalyses N-methylnicotinate + FADH2 + O2 = (Z)-2-((N-methylformamido)methylene)-5-hydroxybutanolactone + FAD + H(+). Functionally, involved in the degradation of the pyridine ring of trigonelline (TG; N-methylnicotinate) into succinate and methylamine as carbon and nitrogen sources, respectively. Catalyzes the insertion of two oxygens, followed by a ring cleavage of trigonelline to yield (Z)-2-((N-methylformamido)methylene)-5-hydroxybutyrolactone (MFMB). It is able to use reduced FMN or FAD. The polypeptide is Flavin-dependent trigonelline monooxygenase, oxygenase component (Acinetobacter baylyi (strain ATCC 33305 / BD413 / ADP1)).